Reading from the N-terminus, the 456-residue chain is Bifunctional protein GlmU (456 aa).

A pyrophosphorylase region spans residues 1-228 (MPQNTLNIVI…SHLAAGVNNK (228 aa)). UDP-N-acetyl-alpha-D-glucosamine is bound by residues 11 to 14 (LAAG), lysine 25, glutamine 75, 80 to 81 (GT), 102 to 104 (YGD), glycine 138, glutamate 153, asparagine 168, and asparagine 226. Aspartate 104 serves as a coordination point for Mg(2+). A Mg(2+)-binding site is contributed by asparagine 226. The segment at 229-249 (LQLTELERIFQTEQAQELLKA) is linker. The interval 250–456 (GVTLRDPARF…GWVRPEKDKQ (207 aa)) is N-acetyltransferase. The UDP-N-acetyl-alpha-D-glucosamine site is built by arginine 332 and lysine 350. Histidine 362 functions as the Proton acceptor in the catalytic mechanism. Residues tyrosine 365 and asparagine 376 each coordinate UDP-N-acetyl-alpha-D-glucosamine. Acetyl-CoA contacts are provided by residues alanine 379, 385 to 386 (NY), serine 404, alanine 422, and arginine 439.

In the N-terminal section; belongs to the N-acetylglucosamine-1-phosphate uridyltransferase family. It in the C-terminal section; belongs to the transferase hexapeptide repeat family. Homotrimer. It depends on Mg(2+) as a cofactor.

Its subcellular location is the cytoplasm. It catalyses the reaction alpha-D-glucosamine 1-phosphate + acetyl-CoA = N-acetyl-alpha-D-glucosamine 1-phosphate + CoA + H(+). It carries out the reaction N-acetyl-alpha-D-glucosamine 1-phosphate + UTP + H(+) = UDP-N-acetyl-alpha-D-glucosamine + diphosphate. The protein operates within nucleotide-sugar biosynthesis; UDP-N-acetyl-alpha-D-glucosamine biosynthesis; N-acetyl-alpha-D-glucosamine 1-phosphate from alpha-D-glucosamine 6-phosphate (route II): step 2/2. It participates in nucleotide-sugar biosynthesis; UDP-N-acetyl-alpha-D-glucosamine biosynthesis; UDP-N-acetyl-alpha-D-glucosamine from N-acetyl-alpha-D-glucosamine 1-phosphate: step 1/1. It functions in the pathway bacterial outer membrane biogenesis; LPS lipid A biosynthesis. Functionally, catalyzes the last two sequential reactions in the de novo biosynthetic pathway for UDP-N-acetylglucosamine (UDP-GlcNAc). The C-terminal domain catalyzes the transfer of acetyl group from acetyl coenzyme A to glucosamine-1-phosphate (GlcN-1-P) to produce N-acetylglucosamine-1-phosphate (GlcNAc-1-P), which is converted into UDP-GlcNAc by the transfer of uridine 5-monophosphate (from uridine 5-triphosphate), a reaction catalyzed by the N-terminal domain. The chain is Bifunctional protein GlmU from Neisseria meningitidis serogroup B (strain ATCC BAA-335 / MC58).